A 299-amino-acid polypeptide reads, in one-letter code: Muscleblind-like protein (299 aa).

C3H1-type zinc fingers lie at residues 38-66 and 72-100; these read WLQV…HPPP and QGRV…HPPQ.

Belongs to the muscleblind family.

It localises to the nucleus. Binds to RNA with repeat sequences CUG and CCUG. The chain is Muscleblind-like protein from Caenorhabditis briggsae.